The chain runs to 295 residues: Probable phosphoglycerate mutase PMU1 (295 aa).

Catalysis depends on histidine 61, which acts as the Tele-phosphohistidine intermediate. The Proton donor/acceptor role is filled by glutamate 170.

The protein belongs to the phosphoglycerate mutase family.

It localises to the cytoplasm. Its subcellular location is the nucleus. Functionally, probable phosphomutase that may have a function related to the manipulation of phosphate groups on carbohydrates. Reduces trehalose-6-phosphate levels when overexpressed in TPS2-deleted cells. Reduces 5'-Phosphoribosyl-4-carboxamide-5-aminoimidazole (AICAR) levels, a metabolic intermediate at the crossroads between AMP and histidine biosynthesis pathways, when overexpressed in a ADE3-ADE16-ADE17 triple deletant. This chain is Probable phosphoglycerate mutase PMU1, found in Saccharomyces cerevisiae (strain ATCC 204508 / S288c) (Baker's yeast).